The primary structure comprises 185 residues: ATP-dependent protease subunit HslV (185 aa).

The active site involves threonine 13. Na(+) is bound by residues glycine 167, cysteine 170, and threonine 173.

It belongs to the peptidase T1B family. HslV subfamily. A double ring-shaped homohexamer of HslV is capped on each side by a ring-shaped HslU homohexamer. The assembly of the HslU/HslV complex is dependent on binding of ATP.

It is found in the cytoplasm. It carries out the reaction ATP-dependent cleavage of peptide bonds with broad specificity.. Its activity is regulated as follows. Allosterically activated by HslU binding. Functionally, protease subunit of a proteasome-like degradation complex believed to be a general protein degrading machinery. The polypeptide is ATP-dependent protease subunit HslV (Sinorhizobium medicae (strain WSM419) (Ensifer medicae)).